A 624-amino-acid polypeptide reads, in one-letter code: MAIVSSVPLASKSCLHKSLISSIHKLKPFCRTIPTLGMSRPGKSVMPSMSMSSPVSDDGVQRRTGGYHSNLWNDDIIQFLSTPYGEPAYRERGERLIDEVKNMFNSISMEDVEFSPLNDLIQRLWIVDSVERLGIDRHFKNEIKSTLDYVYSYWTQKGIGCGIESVVPDLNSTALGLRTLRLHGYPVSAEVLKHFQNQNGQFACSPSETEGEMRSIVNLYRASLIAFPGEKVMEEAEIFSTKYLKEALQKIPVSSLSREIGDVLEQDWHTNLPRLEARNYIDVFGQDTKDTKLYMKTEKLLELAKLEFNIFQSLQKTELDSLLRWWKDSGFHHITFSRHLHVEYYTLASCIAFEPQHSRFRLGFAKACHVITILDDMYDVFGTIDELELFTAQIKRWDPSATDCLPKYMKRMYMILYDMVNEMSREAETAQGRDTLNYARQAWEDFIDSYMQEAKWIATGYLPTFDEYFENGKVSSGHRVAALQPILTMDIPFPHDILKEVDFPSKLNDLASAILRLRGDTRCYKADRARGEEASCISCYMKDNPGATEEDALSHINAVINDVIKGLNWELLNPNSSVPISSKKHVFDVSRALHYGYKYRDGYSVSNIETKSLVMRTLLESVPF.

The transit peptide at 1–48 (MAIVSSVPLASKSCLHKSLISSIHKLKPFCRTIPTLGMSRPGKSVMPS) directs the protein to the chloroplast. The segment at 41 to 60 (PGKSVMPSMSMSSPVSDDGV) is disordered. A compositionally biased stretch (low complexity) spans 44–56 (SVMPSMSMSSPVS). The Mg(2+) site is built by aspartate 375, aspartate 379, and aspartate 527. The DDXXD motif signature appears at 375-379 (DDMYD).

Belongs to the terpene synthase family. Tpsd subfamily. Requires Mg(2+) as cofactor. Mn(2+) serves as cofactor.

The protein resides in the plastid. The protein localises to the chloroplast. It catalyses the reaction (2E)-geranyl diphosphate = (-)-beta-phellandrene + diphosphate. It participates in terpene metabolism; oleoresin biosynthesis. Terpene synthase (TPS) involved in the biosynthesis of monoterpene natural products included in conifer oleoresin secretions and volatile emissions; these compounds contribute to biotic and abiotic stress defense against herbivores and pathogens. Catalyzes the conversion of (2E)-geranyl diphosphate (GPP) to (-)-beta-phellandrene. The polypeptide is (-)-beta-phellandrene synthase 4, chloroplastic (Picea sitchensis (Sitka spruce)).